The following is a 438-amino-acid chain: Terminase, large subunit (438 aa).

The Walker A motif signature appears at 62–68 (SRRVGKS). The Walker B motif motif lies at 150–155 (FIIFDE). Glu-155 functions as the For ATPase activity in the catalytic mechanism. Mg(2+)-binding residues include Asp-286, Asp-342, and Asp-418.

This sequence belongs to the Tequatrovirus large terminase family. Interacts with the terminase small subunit; the active complex is probably heterooligomeric. Interacts with the portal protein. Mg(2+) serves as cofactor.

Its function is as follows. The terminase large subunit acts as an ATP driven molecular motor necessary for viral DNA translocation into empty capsids and as an endonuclease that cuts the viral genome to initiate and to end a packaging reaction The terminase lies at a unique vertex of the procapsid and is composed of two subunits, a small terminase subunit involved in viral DNA recognition (packaging sequence), and a large terminase subunit possessing endonucleolytic and ATPase activities. Both terminase subunits heterooligomerize and are docked on the portal protein to form the packaging machine. The terminase large subunit exhibits endonuclease activity and cleaves the viral genome concatemer. Direct long terminal repeats at each end of the genome are duplicated in concert with packaging. Once the capsid is packaged with the DNA, the terminase complex is substituted by the tail. The polypeptide is Terminase, large subunit (Escherichia phage T5 (Enterobacteria phage T5)).